Reading from the N-terminus, the 323-residue chain is Coiled-coil domain-containing protein 160 (323 aa).

The segment at 1–81 is disordered; sequence MDARRKHWKD…EGEQDSNLRE (81 aa). The segment covering 48–58 has biased composition (polar residues); that stretch reads SNFSVRNTQEG. Positions 144 to 289 form a coiled coil; the sequence is LRLHLLNEEL…IKNELRVEKT (146 aa).

This sequence belongs to the CCDC160 family.

This is Coiled-coil domain-containing protein 160 (Ccdc160) from Mus musculus (Mouse).